A 479-amino-acid chain; its full sequence is Putative L-cysteine desulfhydrase 2 (479 aa).

The tract at residues 1–36 (MASLQSGGDAAANGVDADVDGAASPPSAKRPRAGAG) is disordered. Low complexity predominate over residues 7–36 (GGDAAANGVDADVDGAASPPSAKRPRAGAG). Position 270 is an N6-(pyridoxal phosphate)lysine (Lys270).

This sequence belongs to the class-V pyridoxal-phosphate-dependent aminotransferase family. It depends on pyridoxal 5'-phosphate as a cofactor.

It catalyses the reaction L-cysteine + H2O = hydrogen sulfide + pyruvate + NH4(+) + H(+). Its function is as follows. Catalyzes the production of hydrogen sulfide (H2S) from cysteine. The protein is Putative L-cysteine desulfhydrase 2 of Oryza sativa subsp. japonica (Rice).